Reading from the N-terminus, the 454-residue chain is Bifunctional protein GlmU (454 aa).

Residues 1–226 (MALNVVILAA…AIEVEGANNR (226 aa)) form a pyrophosphorylase region. Residues 8–11 (LAAG), K22, Q73, 78–79 (GT), 100–102 (YGD), G137, E151, N166, and N224 each bind UDP-N-acetyl-alpha-D-glucosamine. D102 serves as a coordination point for Mg(2+). Residue N224 participates in Mg(2+) binding. The tract at residues 227-247 (VQLAQLERAYQAREAEKLMIA) is linker. The tract at residues 248–454 (GANLRDPSRI…GWQRPVKIKK (207 aa)) is N-acetyltransferase. The UDP-N-acetyl-alpha-D-glucosamine site is built by R330 and K348. H360 serves as the catalytic Proton acceptor. Y363 and N374 together coordinate UDP-N-acetyl-alpha-D-glucosamine. Residues A377, 383–384 (NY), S402, A420, and R437 each bind acetyl-CoA.

This sequence in the N-terminal section; belongs to the N-acetylglucosamine-1-phosphate uridyltransferase family. In the C-terminal section; belongs to the transferase hexapeptide repeat family. In terms of assembly, homotrimer. Mg(2+) serves as cofactor.

It is found in the cytoplasm. It carries out the reaction alpha-D-glucosamine 1-phosphate + acetyl-CoA = N-acetyl-alpha-D-glucosamine 1-phosphate + CoA + H(+). It catalyses the reaction N-acetyl-alpha-D-glucosamine 1-phosphate + UTP + H(+) = UDP-N-acetyl-alpha-D-glucosamine + diphosphate. Its pathway is nucleotide-sugar biosynthesis; UDP-N-acetyl-alpha-D-glucosamine biosynthesis; N-acetyl-alpha-D-glucosamine 1-phosphate from alpha-D-glucosamine 6-phosphate (route II): step 2/2. It functions in the pathway nucleotide-sugar biosynthesis; UDP-N-acetyl-alpha-D-glucosamine biosynthesis; UDP-N-acetyl-alpha-D-glucosamine from N-acetyl-alpha-D-glucosamine 1-phosphate: step 1/1. The protein operates within bacterial outer membrane biogenesis; LPS lipid A biosynthesis. Catalyzes the last two sequential reactions in the de novo biosynthetic pathway for UDP-N-acetylglucosamine (UDP-GlcNAc). The C-terminal domain catalyzes the transfer of acetyl group from acetyl coenzyme A to glucosamine-1-phosphate (GlcN-1-P) to produce N-acetylglucosamine-1-phosphate (GlcNAc-1-P), which is converted into UDP-GlcNAc by the transfer of uridine 5-monophosphate (from uridine 5-triphosphate), a reaction catalyzed by the N-terminal domain. This Shewanella sp. (strain ANA-3) protein is Bifunctional protein GlmU.